The chain runs to 130 residues: Small ribosomal subunit protein uS11c (130 aa).

Belongs to the universal ribosomal protein uS11 family. Part of the 30S ribosomal subunit.

It localises to the plastid. The protein localises to the chloroplast. This is Small ribosomal subunit protein uS11c from Nephroselmis olivacea (Green alga).